A 39-amino-acid polypeptide reads, in one-letter code: MERNPNPNNLPVELNRTSLYLGLLFVFVTGVLMSSYFFN.

Residues serine 18–phenylalanine 38 traverse the membrane as a helical segment.

It belongs to the PsbL family. As to quaternary structure, PSII is composed of 1 copy each of membrane proteins PsbA, PsbB, PsbC, PsbD, PsbE, PsbF, PsbH, PsbI, PsbJ, PsbK, PsbL, PsbM, PsbT, PsbX, PsbY, PsbZ, Psb30/Ycf12, peripheral proteins PsbO, CyanoQ (PsbQ), PsbU, PsbV and a large number of cofactors. It forms dimeric complexes.

The protein resides in the cellular thylakoid membrane. In terms of biological role, one of the components of the core complex of photosystem II (PSII). PSII is a light-driven water:plastoquinone oxidoreductase that uses light energy to abstract electrons from H(2)O, generating O(2) and a proton gradient subsequently used for ATP formation. It consists of a core antenna complex that captures photons, and an electron transfer chain that converts photonic excitation into a charge separation. This subunit is found at the monomer-monomer interface and is required for correct PSII assembly and/or dimerization. The protein is Photosystem II reaction center protein L of Synechococcus sp. (strain CC9605).